The following is a 146-amino-acid chain: Hemoglobin subunit beta (146 aa).

The Globin domain occupies 2-146; that stretch reads QWTAEEKQLI…VAHALARKYH (145 aa). His-63 and His-92 together coordinate heme b.

This sequence belongs to the globin family. In terms of assembly, heterotetramer of two alpha chains and two beta chains. In terms of tissue distribution, red blood cells.

In terms of biological role, involved in oxygen transport from the lung to the various peripheral tissues. In Turdus merula (Common blackbird), this protein is Hemoglobin subunit beta (HBB).